The primary structure comprises 498 residues: DNA-directed RNA polymerase subunit Rpo2N (498 aa).

It belongs to the RNA polymerase beta chain family. Part of the RNA polymerase complex.

The protein resides in the cytoplasm. The catalysed reaction is RNA(n) + a ribonucleoside 5'-triphosphate = RNA(n+1) + diphosphate. Functionally, DNA-dependent RNA polymerase (RNAP) catalyzes the transcription of DNA into RNA using the four ribonucleoside triphosphates as substrates. The Rpo2 subunit (Rpo2N and Rpo2C in this organism) is implicated in DNA promoter recognition and in nucleotide binding. This chain is DNA-directed RNA polymerase subunit Rpo2N, found in Methanocaldococcus jannaschii (strain ATCC 43067 / DSM 2661 / JAL-1 / JCM 10045 / NBRC 100440) (Methanococcus jannaschii).